Here is a 352-residue protein sequence, read N- to C-terminus: Protein Wnt-3a (352 aa).

A signal peptide spans 1–18 (MAPLGYFLLLCSLKQALG). 11 cysteine pairs are disulfide-bonded: C77/C88, C128/C136, C138/C155, C203/C217, C205/C212, C281/C312, C297/C307, C311/C351, C327/C342, C329/C339, and C334/C335. N87 carries N-linked (GlcNAc...) asparagine glycosylation. A lipid anchor (O-palmitoleoyl serine; by PORCN) is attached at S209. N298 carries N-linked (GlcNAc...) asparagine glycosylation.

The protein belongs to the Wnt family. As to quaternary structure, forms a soluble 1:1 complex with AFM; this prevents oligomerization and is required for prolonged biological activity. The complex with AFM may represent the physiological form in body fluids. Homooligomer; disulfide-linked, leading to inactivation. Interacts with PORCN. Interacts with APCDD1 and WLS. Component of the Wnt-Fzd-LRP5-LRP6 signaling complex that contains a WNT protein, a FZD protein and LRP5 or LRP6. Interacts directly in the complex with LRP6. Interacts with glypican GPC3. Interacts with PKD1 (via extracellular domain). Interacts with FZD5. Palmitoleoylation by PORCN is required for efficient binding to frizzled receptors. Palmitoleoylation is required for proper trafficking to cell surface, vacuolar acidification is critical to release palmitoleoylated WNT3A from WLS in secretory vesicles. Depalmitoleoylated by NOTUM, leading to inhibit Wnt signaling pathway, possibly by promoting disulfide bond formation and oligomerization. In terms of processing, proteolytic processing by TIKI1 and TIKI2 promotes oxidation and formation of large disulfide-bond oligomers, leading to inactivation of WNT3A. Post-translationally, disulfide bonds have critical and distinct roles in secretion and activity. Loss of each conserved cysteine in WNT3A results in high molecular weight oxidized Wnt oligomers, which are formed through inter-Wnt disulfide bonding. Moderately expressed in placenta and at low levels in adult lung, spleen, and prostate.

The protein localises to the secreted. The protein resides in the extracellular space. It localises to the extracellular matrix. Functionally, ligand for members of the frizzled family of seven transmembrane receptors. Functions in the canonical Wnt signaling pathway that results in activation of transcription factors of the TCF/LEF family. Required for normal embryonic mesoderm development and formation of caudal somites. Required for normal morphogenesis of the developing neural tube. Mediates self-renewal of the stem cells at the bottom on intestinal crypts (in vitro). The polypeptide is Protein Wnt-3a (WNT3A) (Homo sapiens (Human)).